The sequence spans 360 residues: MKTWVIKIGTSILRGTEETSTEEVIENLSRSFTSFLSKGNKLILVTSGAVGLGCQKLNIKTRPNDLSTLQATAAVGQVNLMSLYDKVFNRLGLNIAQILITKADFNSRESFNNASKTLKRLIDLNVIPIVNENDTVANEELKYGDNDTLSALVALAINANKLILLTDIENLYSKDPRNNKDAQPIKEVHNSELKEIKDKNIQNSNNEWGTGGISTKLISAEIATKGGVEVQLVDGTNKKNLIEIFNDNKIGTLFYPVEKPIGNKKSWLSHAIQTVGKITLDDGASFAIKKKGASLLAVGVKNVEGNFTINQAVKIVNTNDKEVAKGLVSISSDKLRSILNNKENNNSSIIVVHRDVLALS.

ATP is bound at residue Lys-7. The substrate site is built by Ser-47, Asp-134, and Asn-146. Residues 166–167 (TD) and 210–216 (TGGISTK) contribute to the ATP site. The region spanning 275 to 356 (VGKITLDDGA…SSIIVVHRDV (82 aa)) is the PUA domain.

Belongs to the glutamate 5-kinase family.

The protein localises to the cytoplasm. It catalyses the reaction L-glutamate + ATP = L-glutamyl 5-phosphate + ADP. It participates in amino-acid biosynthesis; L-proline biosynthesis; L-glutamate 5-semialdehyde from L-glutamate: step 1/2. Functionally, catalyzes the transfer of a phosphate group to glutamate to form L-glutamate 5-phosphate. The sequence is that of Glutamate 5-kinase from Prochlorococcus marinus (strain AS9601).